The following is a 191-amino-acid chain: Adenylate kinase (191 aa).

12-17 is a binding site for ATP; the sequence is GSGKTT. Positions 34–63 are NMP; the sequence is STGDLLRAESAKKTERGLLIEKFTSQGELV. AMP-binding positions include threonine 35, arginine 40, 61-63, 88-91, and glutamine 95; these read ELV and GYPR. Positions 130–136 are LID; that stretch reads GRSRGAD. An ATP-binding site is contributed by arginine 131. AMP contacts are provided by arginine 133 and arginine 145. Arginine 173 lines the ATP pocket.

Belongs to the adenylate kinase family. Monomer.

Its subcellular location is the cytoplasm. The catalysed reaction is AMP + ATP = 2 ADP. It functions in the pathway purine metabolism; AMP biosynthesis via salvage pathway; AMP from ADP: step 1/1. Its function is as follows. Catalyzes the reversible transfer of the terminal phosphate group between ATP and AMP. Plays an important role in cellular energy homeostasis and in adenine nucleotide metabolism. In Helicobacter pylori (strain HPAG1), this protein is Adenylate kinase.